The sequence spans 126 residues: Small ribosomal subunit protein uS13c (126 aa).

Residues 100-126 are disordered; it reads GQRTRTNARTRRGARQTVAGKKKAPSK. Residues 101-126 are compositionally biased toward basic residues; it reads QRTRTNARTRRGARQTVAGKKKAPSK.

This sequence belongs to the universal ribosomal protein uS13 family. Part of the 30S ribosomal subunit.

Its subcellular location is the plastid. It localises to the cyanelle. Functionally, located at the top of the head of the 30S subunit, it contacts several helices of the 16S rRNA. The chain is Small ribosomal subunit protein uS13c from Cyanophora paradoxa.